The primary structure comprises 383 residues: Interleukin-13 receptor subunit alpha-2 (383 aa).

Residues 1-21 form the signal peptide; the sequence is MAFVHIRCLCFILLCTITGYS. The Extracellular segment spans residues 22–334; it reads LEIKVNPPQD…WEGYTGPDSK (313 aa). Fibronectin type-III domains lie at 28-128, 131-219, and 234-332; these read PPQD…SDEG, ETKI…PIRS, and PPEF…TGPD. An intrachain disulfide couples Cys-59 to Cys-107. A glycan (N-linked (GlcNAc...) asparagine) is linked at Asn-109. A disulfide bridge connects residues Cys-139 and Cys-149. Residue Asn-162 is glycosylated (N-linked (GlcNAc...) asparagine). A disulfide bond links Cys-178 and Cys-191. Asn-209 and Asn-293 each carry an N-linked (GlcNAc...) asparagine glycan. Cys-263 and Cys-310 are joined by a disulfide. Residues 316–320 carry the WSXWS motif motif; sequence WSEWS. Residues 335 to 355 traverse the membrane as a helical segment; the sequence is IIFIVPVCLFFIFLLLLLCLI. Residues 356–383 are Cytoplasmic-facing; the sequence is VEKEEPEPTLSLHVDLNKEVCAYEDTLC.

This sequence belongs to the type I cytokine receptor family. Type 5 subfamily. In terms of assembly, interacts with IL4RA. Interacts with high affinity to interleukin-13 (IL13), but not to interleukin-4 (IL4). Post-translationally, cleaved by MMP8 leading to a soluble form that is also able to interact with IL13.

The protein localises to the cell membrane. It is found in the secreted. Its function is as follows. Cell surface receptor that plays a role in the regulation of IL-13-mediated responses. Functions as a decoy receptor that inhibits IL-13- and IL-4-mediated signal transduction via the JAK-STAT pathway and thereby modulates immune responses and inflammation. Serves as a functional signaling receptor for IL-13 in an alternative pathway involving AP-1 ultimately leading to the production of TGFB1. The sequence is that of Interleukin-13 receptor subunit alpha-2 (Il13ra2) from Mus musculus (Mouse).